Reading from the N-terminus, the 271-residue chain is Putative phosphoenolpyruvate synthase regulatory protein (271 aa).

Residue 151–158 participates in ADP binding; the sequence is GVSRSGKT.

The protein belongs to the pyruvate, phosphate/water dikinase regulatory protein family. PSRP subfamily.

It carries out the reaction [pyruvate, water dikinase] + ADP = [pyruvate, water dikinase]-phosphate + AMP + H(+). It catalyses the reaction [pyruvate, water dikinase]-phosphate + phosphate + H(+) = [pyruvate, water dikinase] + diphosphate. Functionally, bifunctional serine/threonine kinase and phosphorylase involved in the regulation of the phosphoenolpyruvate synthase (PEPS) by catalyzing its phosphorylation/dephosphorylation. The sequence is that of Putative phosphoenolpyruvate synthase regulatory protein from Paraburkholderia xenovorans (strain LB400).